The following is a 493-amino-acid chain: MLFAQLVILVIIVMLFLCRFANKLRGLPPGPTPWPFIGNTFQVPEDRIDLIINEFKKKYGGIFTLWLPFPTIVICDYDMLKRNIVKNGESFSGRPDTFIMDMLVQGNYGLFFMENNWWKAQRRFTTHIFRSLGVGQAGTQDTIASLASGLVEKIDGQKDKPIELRPLLVHVVGNVIHKHLFGFTREWNETEILDFHVAINDVLEHFTSPKTQLLDAWPWLAYLDKPLSLGIPRTTRANDAIIQNLEQALAKHKTGINYDEEPSSYMDAFLKEMKIRAAENALEDGFTEKQLIVAIYDLYSAGMETIIIVLRFAFLYLVNNPETQKRIHEELDRNVGRERQVVMDDQKHLPYTCAFLQEVYRLGYVLPVNFLRCTLTDVEDCEGYRLNAGTRVIAQFQSVHVDKKHFPDPEHFNPDRFLNSRGEYIRDDRVNPFSMGKRSCLGENLARMEVFLYFCTLMQNFEWHTDGPYAPPIDVITSSLRAPKPFTVRASRR.

3 helical membrane-spanning segments follow: residues 1–21 (MLFA…CRFA), 60–80 (GGIF…YDML), and 290–310 (QLIV…IIVL). Cysteine 440 is a binding site for heme.

It belongs to the cytochrome P450 family. The cofactor is heme.

It localises to the membrane. Cytochromes P450 are a group of heme-thiolate monooxygenases. They oxidize a variety of structurally unrelated compounds, including steroids, fatty acids, and xenobiotics. This Caenorhabditis elegans protein is Probable cytochrome P450 CYP36A1 (cyp-36A1).